The sequence spans 562 residues: Oxygen-dependent choline dehydrogenase (562 aa).

4–33 (DYIIIGAGSAGNVLATRLTEDPNTTVLLLE) contributes to the FAD binding site. Histidine 473 serves as the catalytic Proton acceptor.

Belongs to the GMC oxidoreductase family. It depends on FAD as a cofactor.

It carries out the reaction choline + A = betaine aldehyde + AH2. The enzyme catalyses betaine aldehyde + NAD(+) + H2O = glycine betaine + NADH + 2 H(+). The protein operates within amine and polyamine biosynthesis; betaine biosynthesis via choline pathway; betaine aldehyde from choline (cytochrome c reductase route): step 1/1. Its function is as follows. Involved in the biosynthesis of the osmoprotectant glycine betaine. Catalyzes the oxidation of choline to betaine aldehyde and betaine aldehyde to glycine betaine at the same rate. This Escherichia coli (strain SMS-3-5 / SECEC) protein is Oxygen-dependent choline dehydrogenase.